The sequence spans 592 residues: Peroxisomal targeting signal receptor (592 aa).

Cys10 participates in a covalent cross-link: Glycyl cysteine thioester (Cys-Gly) (interchain with G-Cter in ubiquitin). An amphipathic helix 1 (AH1) region spans residues Ser11–Gln33. Residue Lys22 forms a Glycyl lysine isopeptide (Lys-Gly) (interchain with G-Cter in ubiquitin) linkage. The span at Lys22–Gly46 shows a compositional bias: polar residues. The tract at residues Lys22 to Lys49 is disordered. Residues Arg58–Phe76 are amphipathic helix 2 (AH2). 3 short sequence motifs (wxxxF/Y motif) span residues Trp100 to Phe104, Trp128 to Phe132, and Trp185 to Phe189. The amphipathic helix 4 (AH4) stretch occupies residues Phe223 to Phe239. The short motif at Trp262 to Phe266 is the WxxxF/Y motif 4 element. TPR repeat units follow at residues Asp295–His329, Val330–Asn363, Ala440–Asp473, Ile475–Phe507, and Arg509–Glu541.

This sequence belongs to the peroxisomal targeting signal receptor family. In terms of assembly, interacts (via WxxxF/Y and LVxEF motifs) with PEX14; promoting translocation through the PEX13-PEX14 docking complex. Post-translationally, monoubiquitinated at Cys-10 by PEX2 during PEX5 passage through the retrotranslocation channel: monoubiquitination acts as a signal for PEX5 extraction and is required for proper export from peroxisomes and recycling. When PEX5 recycling is compromised, polyubiquitinated at Lys-22 by PEX10 during its passage through the retrotranslocation channel, leading to its degradation.

Its subcellular location is the cytoplasm. It localises to the cytosol. The protein localises to the peroxisome matrix. Receptor that mediates peroxisomal import of proteins containing a C-terminal PTS1-type tripeptide peroxisomal targeting signal (SKL-type). Binds to cargo proteins containing a PTS1 peroxisomal targeting signal in the cytosol, and translocates them into the peroxisome matrix by passing through the PEX13-PEX14 docking complex along with cargo proteins. PEX5 receptor is then retrotranslocated into the cytosol, leading to release of bound cargo in the peroxisome matrix, and reset for a subsequent peroxisome import cycle. The polypeptide is Peroxisomal targeting signal receptor (PEX5) (Candida albicans (strain SC5314 / ATCC MYA-2876) (Yeast)).